Reading from the N-terminus, the 457-residue chain is Aromatic amino acid transport protein AroP (457 aa).

The Cytoplasmic segment spans residues 1-19 (MMEGQQHGEQLKRGLKNRH). The helical transmembrane segment at 20–40 (IQLIALGGAIGTGLFLGSASV) threads the bilayer. The Periplasmic portion of the chain corresponds to 41–42 (IQ). The helical transmembrane segment at 43–63 (SAGPGIILGYAIAGFIAFLIM) threads the bilayer. Residues 64-86 (RQLGEMVVEEPVAGSFSHFAYKY) lie on the Cytoplasmic side of the membrane. Residues 87-107 (WGSFAGFASGWNYWVLYVLVA) form a helical membrane-spanning segment. Over 108–117 (MAELTAVGKY) the chain is Periplasmic. A helical membrane pass occupies residues 118–138 (IQFWYPEIPTWVSAAVFFVVI). Residues 139 to 155 (NAINLTNVTVFGEMEFW) are Cytoplasmic-facing. A helical membrane pass occupies residues 156 to 176 (FAIIKVIAVVAMIIFGGWLLF). Topologically, residues 177 to 201 (SGNGGPQASVSNLWDQGGFLPHGFT) are periplasmic. Residues 202–222 (GLVMMMAIIMFSFGGLELVGI) traverse the membrane as a helical segment. Over 223-240 (TAAEADNPEQSIPKATNQ) the chain is Cytoplasmic. The chain crosses the membrane as a helical span at residues 241–261 (VIYRILIFYIGSLAVLLSLMP). Over 262–271 (WTRVTADTSP) the chain is Periplasmic. Residues 272–292 (FVLIFHELGDTFVANALNIVV) form a helical membrane-spanning segment. At 293–333 (LTAALSVYNSCVYCNSRMLFGLAQQGNAPKALASVDKRGVP) the chain is on the cytoplasmic side. A helical transmembrane segment spans residues 334 to 354 (VNTILVSALVTALCVLINYLA). Residues 355-358 (PESA) lie on the Periplasmic side of the membrane. The chain crosses the membrane as a helical span at residues 359–379 (FGLLMALVVSALVINWAMISL). Over 380–407 (AHMKFRRAKQEQGVVTRFPALLYPLGNW) the chain is Cytoplasmic. A helical membrane pass occupies residues 408–428 (ICLLFMAVVLVIMLMTPGMAI). A topological domain (periplasmic) is located at residue Ser429. A helical membrane pass occupies residues 430 to 450 (VYLIPVWLVVLGIGYLFKEKT). Residues 451–457 (AKAVKAH) are Cytoplasmic-facing.

It belongs to the amino acid-polyamine-organocation (APC) superfamily. Amino acid transporter (AAT) (TC 2.A.3.1) family.

The protein localises to the cell inner membrane. The enzyme catalyses L-phenylalanine(in) + H(+)(in) = L-phenylalanine(out) + H(+)(out). The catalysed reaction is L-tryptophan(in) + H(+)(in) = L-tryptophan(out) + H(+)(out). It catalyses the reaction L-tyrosine(in) + H(+)(in) = L-tyrosine(out) + H(+)(out). Functionally, permease that is involved in the active transport across the cytoplasmic membrane of all three aromatic amino acids, phenylalanine, tyrosine and tryptophan. This chain is Aromatic amino acid transport protein AroP (aroP), found in Escherichia coli O157:H7.